Here is a 450-residue protein sequence, read N- to C-terminus: tRNA-2-methylthio-N(6)-dimethylallyladenosine synthase (450 aa).

The MTTase N-terminal domain occupies 8–124 (RTLHITTWGC…LPELIAEIEA (117 aa)). Cys-17, Cys-52, Cys-87, Cys-162, Cys-166, and Cys-169 together coordinate [4Fe-4S] cluster. The Radical SAM core domain occupies 148-380 (ASQGPIAFLA…QAVLRDQQHA (233 aa)). The 63-residue stretch at 383–445 (RAQVGRSFEV…PNSLMASLTQ (63 aa)) folds into the TRAM domain.

Belongs to the methylthiotransferase family. MiaB subfamily. In terms of assembly, monomer. The cofactor is [4Fe-4S] cluster.

Its subcellular location is the cytoplasm. The enzyme catalyses N(6)-dimethylallyladenosine(37) in tRNA + (sulfur carrier)-SH + AH2 + 2 S-adenosyl-L-methionine = 2-methylsulfanyl-N(6)-dimethylallyladenosine(37) in tRNA + (sulfur carrier)-H + 5'-deoxyadenosine + L-methionine + A + S-adenosyl-L-homocysteine + 2 H(+). Catalyzes the methylthiolation of N6-(dimethylallyl)adenosine (i(6)A), leading to the formation of 2-methylthio-N6-(dimethylallyl)adenosine (ms(2)i(6)A) at position 37 in tRNAs that read codons beginning with uridine. This Acidiphilium cryptum (strain JF-5) protein is tRNA-2-methylthio-N(6)-dimethylallyladenosine synthase.